A 379-amino-acid chain; its full sequence is Cytochrome b (379 aa).

4 helical membrane passes run F33 to M53, W77 to V98, W113 to L133, and F178 to L198. The heme b site is built by H83 and H97. Residues H182 and H196 each coordinate heme b. A ubiquinone is bound at residue H201. Transmembrane regions (helical) follow at residues T226–F246, L288–N308, V320–G340, and F347–P367.

It belongs to the cytochrome b family. The cytochrome bc1 complex contains 11 subunits: 3 respiratory subunits (MT-CYB, CYC1 and UQCRFS1), 2 core proteins (UQCRC1 and UQCRC2) and 6 low-molecular weight proteins (UQCRH/QCR6, UQCRB/QCR7, UQCRQ/QCR8, UQCR10/QCR9, UQCR11/QCR10 and a cleavage product of UQCRFS1). This cytochrome bc1 complex then forms a dimer. It depends on heme b as a cofactor.

The protein resides in the mitochondrion inner membrane. Its function is as follows. Component of the ubiquinol-cytochrome c reductase complex (complex III or cytochrome b-c1 complex) that is part of the mitochondrial respiratory chain. The b-c1 complex mediates electron transfer from ubiquinol to cytochrome c. Contributes to the generation of a proton gradient across the mitochondrial membrane that is then used for ATP synthesis. The polypeptide is Cytochrome b (MT-CYB) (Akodon kofordi (Koford's grass mouse)).